Here is a 217-residue protein sequence, read N- to C-terminus: Ependymin (217 aa).

The N-terminal stretch at 1 to 20 (MHTVKLLCVVFSCLCAIGWA) is a signal peptide. 2 N-linked (GlcNAc...) asparagine glycosylation sites follow: Asn-73 and Asn-96.

The protein belongs to the ependymin family. In terms of assembly, forms disulfide-linked dimers. Binds calcium through the terminal sialic acids. EPDs are synthesized in the meninx and secreted in the cerebrospinal fluid.

The protein resides in the secreted. Functionally, may play a role in neural plasticity. May be involved during axon regeneration. This Danio rerio (Zebrafish) protein is Ependymin (epd).